The chain runs to 1147 residues: Probable phospholipid-transporting ATPase IIB (1147 aa).

Residues 1 to 146 (MADQIPLYPV…NQKYNVFTFI (146 aa)) are Cytoplasmic-facing. The helical transmembrane segment at 147–168 (PGVLYEQFKFFLNLYFLVISCS) threads the bilayer. The Extracellular portion of the chain corresponds to 169 to 173 (QFVPA). A helical membrane pass occupies residues 174–196 (LKIGYLYTYWAPLGFVLAVTMTR). Residues 197–380 (EAIDEFRRFQ…GLLDLELNRL (184 aa)) lie on the Cytoplasmic side of the membrane. Residues 381 to 401 (TKALFLALVALSIVMVTLQGF) traverse the membrane as a helical segment. Residues 402–409 (VGPWYRNL) are Extracellular-facing. Residues 410-431 (FRFLLLFSYIIPISLRVNLDMG) form a helical membrane-spanning segment. The Cytoplasmic portion of the chain corresponds to 432 to 930 (KAVYGWMMMK…GRNSYKRSAA (499 aa)). The active-site 4-aspartylphosphate intermediate is D468. Residues D468, K469, and T470 each contribute to the ATP site. D468 provides a ligand contact to Mg(2+). Residue T470 participates in Mg(2+) binding. The segment at 503 to 535 (RDSYSQMQSQAGGNNTGSTPLRKAQSSAPKVRK) is disordered. A compositionally biased stretch (polar residues) spans 505–530 (SYSQMQSQAGGNNTGSTPLRKAQSSA). Residues E591, F633, K638, K657, R686, T687, T766, G767, D768, R848, and K854 each coordinate ATP. Residue D874 coordinates Mg(2+). Residues N877 and D878 each coordinate ATP. D878 contributes to the Mg(2+) binding site. The chain crosses the membrane as a helical span at residues 931-951 (LGQFVMHRGLIISTMQAVFSS). The Extracellular segment spans residues 952 to 963 (VFYFASVPLYQG). The helical transmembrane segment at 964–982 (FLMVGYATIYTMFPVFSLV) threads the bilayer. The Cytoplasmic segment spans residues 983–1012 (LDQDVKPEMAMLYPELYKDLTKGRSLSFKT). A helical transmembrane segment spans residues 1013–1031 (FLIWVLISIYQGGILMYGA). Residues 1032–1038 (LVLFESE) are Extracellular-facing. The helical transmembrane segment at 1039–1061 (FVHVVAISFTALILTELLMVALT) threads the bilayer. The Cytoplasmic segment spans residues 1062-1067 (VRTWHW). A helical membrane pass occupies residues 1068–1088 (LMVVAEFLSLGCYVSSLAFLN). At 1089–1105 (EYFGIGRVSFGAFLDVA) the chain is on the extracellular side. A helical transmembrane segment spans residues 1106 to 1130 (FITTVTFLWKVSAITVVSCLPLYVL). The Cytoplasmic segment spans residues 1131–1147 (KYLRRKLSPPSYCKLAS).

Belongs to the cation transport ATPase (P-type) (TC 3.A.3) family. Type IV subfamily. Mg(2+) is required as a cofactor.

Its subcellular location is the golgi apparatus. It localises to the trans-Golgi network membrane. It carries out the reaction ATP + H2O + phospholipidSide 1 = ADP + phosphate + phospholipidSide 2.. This is Probable phospholipid-transporting ATPase IIB (ATP9B) from Homo sapiens (Human).